Consider the following 122-residue polypeptide: Large ribosomal subunit protein uL14 (122 aa).

This sequence belongs to the universal ribosomal protein uL14 family. As to quaternary structure, part of the 50S ribosomal subunit. Forms a cluster with proteins L3 and L19. In the 70S ribosome, L14 and L19 interact and together make contacts with the 16S rRNA in bridges B5 and B8.

Binds to 23S rRNA. Forms part of two intersubunit bridges in the 70S ribosome. The sequence is that of Large ribosomal subunit protein uL14 from Chloroherpeton thalassium (strain ATCC 35110 / GB-78).